We begin with the raw amino-acid sequence, 254 residues long: Floral homeotic protein APETALA 1 (254 aa).

The region spanning 3-57 is the MADS-box domain; that stretch reads RGRVQLKRIENKINRQVTFSKRRAGLLKKAHEISVLCDAEVALVVFSHKGKLFEY. The K-box domain occupies 88 to 178; sequence NTNWSMEYNR…SKQIKEREKI (91 aa).

The protein resides in the nucleus. Functionally, controls floral meristem identity. Is also required for normal development of sepals and petals. Is required for the transition of an influorescence meristem into a floral meristem. Interacts with LEAFY. In Sinapis alba (White mustard), this protein is Floral homeotic protein APETALA 1 (AP1).